Here is a 426-residue protein sequence, read N- to C-terminus: Histidine--tRNA ligase 1 (426 aa).

Belongs to the class-II aminoacyl-tRNA synthetase family. Homodimer.

It is found in the cytoplasm. The enzyme catalyses tRNA(His) + L-histidine + ATP = L-histidyl-tRNA(His) + AMP + diphosphate + H(+). The protein is Histidine--tRNA ligase 1 of Shouchella clausii (strain KSM-K16) (Alkalihalobacillus clausii).